Consider the following 359-residue polypeptide: Fructose-bisphosphate aldolase, cytoplasmic isozyme 2 (359 aa).

Substrate-binding residues include Arg52 and Lys143. The Proton acceptor role is filled by Glu184. The Schiff-base intermediate with dihydroxyacetone-P role is filled by Lys226.

The protein belongs to the class I fructose-bisphosphate aldolase family.

The protein resides in the cytoplasm. The catalysed reaction is beta-D-fructose 1,6-bisphosphate = D-glyceraldehyde 3-phosphate + dihydroxyacetone phosphate. Its pathway is carbohydrate degradation; glycolysis; D-glyceraldehyde 3-phosphate and glycerone phosphate from D-glucose: step 4/4. In Pisum sativum (Garden pea), this protein is Fructose-bisphosphate aldolase, cytoplasmic isozyme 2.